Consider the following 377-residue polypeptide: Succinyl-diaminopimelate desuccinylase (377 aa).

His-67 serves as a coordination point for Zn(2+). Residue Asp-69 is part of the active site. Asp-100 contacts Zn(2+). Glu-134 serves as the catalytic Proton acceptor. Zn(2+) is bound by residues Glu-135, Glu-163, and His-349.

The protein belongs to the peptidase M20A family. DapE subfamily. Homodimer. Zn(2+) is required as a cofactor. It depends on Co(2+) as a cofactor.

The enzyme catalyses N-succinyl-(2S,6S)-2,6-diaminopimelate + H2O = (2S,6S)-2,6-diaminopimelate + succinate. Its pathway is amino-acid biosynthesis; L-lysine biosynthesis via DAP pathway; LL-2,6-diaminopimelate from (S)-tetrahydrodipicolinate (succinylase route): step 3/3. In terms of biological role, catalyzes the hydrolysis of N-succinyl-L,L-diaminopimelic acid (SDAP), forming succinate and LL-2,6-diaminopimelate (DAP), an intermediate involved in the bacterial biosynthesis of lysine and meso-diaminopimelic acid, an essential component of bacterial cell walls. In Haemophilus influenzae (strain PittGG), this protein is Succinyl-diaminopimelate desuccinylase.